We begin with the raw amino-acid sequence, 175 residues long: MSQALTLARPYGRAAFAIAREGGTFAPWSDALAFSAQVAGDPRVAALLLNPALGQEQAVTLLAPPQAGEDYLRFLGVLADAQRLSLLPEVAGLYEHLRAEAEHVVKATVTSAAAMSQTELDTIAAALKKRFGRDVDITTAVDASLIGGAVIDTGDVVIDGSLKGKLARLQSSLAH.

Belongs to the ATPase delta chain family. F-type ATPases have 2 components, F(1) - the catalytic core - and F(0) - the membrane proton channel. F(1) has five subunits: alpha(3), beta(3), gamma(1), delta(1), epsilon(1). F(0) has three main subunits: a(1), b(2) and c(10-14). The alpha and beta chains form an alternating ring which encloses part of the gamma chain. F(1) is attached to F(0) by a central stalk formed by the gamma and epsilon chains, while a peripheral stalk is formed by the delta and b chains.

It is found in the cell inner membrane. In terms of biological role, f(1)F(0) ATP synthase produces ATP from ADP in the presence of a proton or sodium gradient. F-type ATPases consist of two structural domains, F(1) containing the extramembraneous catalytic core and F(0) containing the membrane proton channel, linked together by a central stalk and a peripheral stalk. During catalysis, ATP synthesis in the catalytic domain of F(1) is coupled via a rotary mechanism of the central stalk subunits to proton translocation. Its function is as follows. This protein is part of the stalk that links CF(0) to CF(1). It either transmits conformational changes from CF(0) to CF(1) or is implicated in proton conduction. This chain is ATP synthase subunit delta, found in Xanthomonas oryzae pv. oryzae (strain MAFF 311018).